We begin with the raw amino-acid sequence, 114 residues long: Probable acid stress chaperone HdeA (114 aa).

Positions 1-26 are cleaved as a signal peptide; that stretch reads MIKALFNKNTALAAVTILALSGGAMA. A disulfide bond links Cys-46 and Cys-94.

This sequence belongs to the HdeA family.

It is found in the periplasm. Its function is as follows. Required for optimal acid stress protection. Exhibits a chaperone-like activity only at low pH by suppressing non-specifically the aggregation of denaturated periplasmic proteins. This chain is Probable acid stress chaperone HdeA, found in Brucella suis biovar 1 (strain 1330).